Consider the following 402-residue polypeptide: Myb-related protein 1 (402 aa).

Residues 42 to 102 (TDAKPRLKWT…HLQKYRLSKN (61 aa)) form the HTH myb-type domain. The segment at residues 73-98 (PKTIMKVMGIPGLTLYHLKSHLQKYR) is a DNA-binding region (H-T-H motif). Positions 148–168 (SDALQMQIEVQRRLHEQLEVQ) form a coiled coil. The short motif at 161–166 (LHEQLE) is the LHEQLE element. The span at 238–260 (QQMQKTYPPNSSLDSCLTSSEGT) shows a compositional bias: polar residues. Disordered regions lie at residues 238-266 (QQMQKTYPPNSSLDSCLTSSEGTQKAPKM), 344-363 (EHRGRSSNNSEYTEERFNEN), and 382-402 (HDENYGTTRPKQFDLNGFSWN).

The protein belongs to the MYB-CC family. As to quaternary structure, isoforms 1 and 2: homodimer. Isoform 3: loss of dimerization. Expressed in phloem and/or cambium.

It localises to the nucleus. Transcription factor that may act on the GAL1 promoter. Acts redundantly with MYR2 as a repressor of flowering and organ elongation under decreased light intensity. Represses gibberellic acid (GA)-dependent responses and affects levels of bioactive GA. In Arabidopsis thaliana (Mouse-ear cress), this protein is Myb-related protein 1.